The sequence spans 592 residues: Multidrug transporter AQR1 (592 aa).

Residues 1–77 (MVESGPHSIN…EISSTHSQDA (77 aa)) form a disordered region. Residues 99 to 119 (WCMVALLTACGFWSSLGSPIY) traverse the membrane as a helical segment. N138 is a glycosylation site (N-linked (GlcNAc...) asparagine). A run of 5 helical transmembrane segments spans residues 139 to 159 (ITVV…GGLA), 166 to 186 (PVLL…ACAP), 188 to 208 (YGVI…SIAI), 231 to 251 (GFVL…AAAW), and 255 to 275 (AIFW…FALL). An N-linked (GlcNAc...) asparagine glycan is attached at N285. The next 6 membrane-spanning stretches (helical) occupy residues 340 to 360 (IFLS…MLSA), 374 to 394 (LTII…GSFA), 432 to 452 (LQSV…FGWS), 459 to 479 (IPSI…TLSA), 497 to 517 (SCFN…FAKM), and 523 to 543 (VGGT…LMFI).

This sequence belongs to the major facilitator superfamily. CAR1 family.

It is found in the cell membrane. Functionally, multidrug transporter acts as a determinant of resistance to acetic acid, flucytosine and clotrimazole, these 3 compounds acting synergistically against the pathogen. Reduces the intracellular accumulation of the antifungal agents flucytosine and, to a moderate extent, of clotrimazole. Its role in acetic acid resistance may be indirect, presumably through the transport of a still unidentified physiological substrate. The polypeptide is Multidrug transporter AQR1 (Candida glabrata (strain ATCC 2001 / BCRC 20586 / JCM 3761 / NBRC 0622 / NRRL Y-65 / CBS 138) (Yeast)).